Reading from the N-terminus, the 214-residue chain is ATP-dependent Clp protease proteolytic subunit (214 aa).

Residue Ser-114 is the Nucleophile of the active site. The active site involves His-139.

The protein belongs to the peptidase S14 family. Fourteen ClpP subunits assemble into 2 heptameric rings which stack back to back to give a disk-like structure with a central cavity, resembling the structure of eukaryotic proteasomes.

The protein localises to the cytoplasm. It catalyses the reaction Hydrolysis of proteins to small peptides in the presence of ATP and magnesium. alpha-casein is the usual test substrate. In the absence of ATP, only oligopeptides shorter than five residues are hydrolyzed (such as succinyl-Leu-Tyr-|-NHMec, and Leu-Tyr-Leu-|-Tyr-Trp, in which cleavage of the -Tyr-|-Leu- and -Tyr-|-Trp bonds also occurs).. Its function is as follows. Cleaves peptides in various proteins in a process that requires ATP hydrolysis. Has a chymotrypsin-like activity. Plays a major role in the degradation of misfolded proteins. This is ATP-dependent Clp protease proteolytic subunit from Nitrosomonas eutropha (strain DSM 101675 / C91 / Nm57).